Reading from the N-terminus, the 106-residue chain is Small ribosomal subunit protein bS6 (106 aa).

Belongs to the bacterial ribosomal protein bS6 family.

Functionally, binds together with bS18 to 16S ribosomal RNA. The chain is Small ribosomal subunit protein bS6 from Cyanothece sp. (strain PCC 7425 / ATCC 29141).